Reading from the N-terminus, the 246-residue chain is NAD-dependent protein deacetylase (246 aa).

Residues methionine 1 to serine 246 enclose the Deacetylase sirtuin-type domain. The NAD(+) site is built by alanine 25, phenylalanine 36, arginine 37, glutamine 106, isoleucine 108, aspartate 109, and histidine 124. Phenylalanine 36 is a binding site for nicotinamide. Residues isoleucine 108 and aspartate 109 each contribute to the nicotinamide site. Histidine 124 acts as the Proton acceptor in catalysis. Zn(2+)-binding residues include cysteine 132, cysteine 135, cysteine 152, and cysteine 155. NAD(+)-binding residues include serine 193, serine 194, asparagine 216, and aspartate 233.

It belongs to the sirtuin family. Class U subfamily. Zn(2+) is required as a cofactor.

The protein localises to the cytoplasm. It carries out the reaction N(6)-acetyl-L-lysyl-[protein] + NAD(+) + H2O = 2''-O-acetyl-ADP-D-ribose + nicotinamide + L-lysyl-[protein]. NAD-dependent protein deacetylase which modulates the activities of several enzymes which are inactive in their acetylated form. This is NAD-dependent protein deacetylase from Staphylococcus epidermidis (strain ATCC 12228 / FDA PCI 1200).